A 383-amino-acid polypeptide reads, in one-letter code: Meiotically up-regulated gene 93 protein (383 aa).

The stretch at 75–108 (KKVIWRRGLAYLRLGHPHLANRDWEHSLELDPNN) is one TPR repeat.

It is found in the cytoplasm. The protein resides in the nucleus. Its function is as follows. Has a role in meiosis. The sequence is that of Meiotically up-regulated gene 93 protein (mug93) from Schizosaccharomyces pombe (strain 972 / ATCC 24843) (Fission yeast).